Consider the following 640-residue polypeptide: 1,4-alpha-glucan branching enzyme GlgB (640 aa).

Asp318 serves as the catalytic Nucleophile. Glu371 serves as the catalytic Proton donor.

Belongs to the glycosyl hydrolase 13 family. GlgB subfamily. In terms of assembly, monomer.

It carries out the reaction Transfers a segment of a (1-&gt;4)-alpha-D-glucan chain to a primary hydroxy group in a similar glucan chain.. It functions in the pathway glycan biosynthesis; glycogen biosynthesis. Functionally, catalyzes the formation of the alpha-1,6-glucosidic linkages in glycogen by scission of a 1,4-alpha-linked oligosaccharide from growing alpha-1,4-glucan chains and the subsequent attachment of the oligosaccharide to the alpha-1,6 position. In Francisella philomiragia subsp. philomiragia (strain ATCC 25017 / CCUG 19701 / FSC 153 / O#319-036), this protein is 1,4-alpha-glucan branching enzyme GlgB.